Here is an 84-residue protein sequence, read N- to C-terminus: Large ribosomal subunit protein bL27c (84 aa).

Residues 1–23 form a disordered region; the sequence is MAHKKGAGSTKNGRDSNAKRLGV.

This sequence belongs to the bacterial ribosomal protein bL27 family.

It is found in the plastid. The protein localises to the chloroplast. This chain is Large ribosomal subunit protein bL27c, found in Thalassiosira pseudonana (Marine diatom).